The following is a 209-amino-acid chain: Uracil phosphoribosyltransferase (209 aa).

Residues Arg-79, Arg-104, and 131–139 (DPMLATGNS) each bind 5-phospho-alpha-D-ribose 1-diphosphate. Uracil-binding positions include Ile-194 and 199–201 (GDA). Asp-200 is a binding site for 5-phospho-alpha-D-ribose 1-diphosphate.

Belongs to the UPRTase family. Mg(2+) serves as cofactor.

The enzyme catalyses UMP + diphosphate = 5-phospho-alpha-D-ribose 1-diphosphate + uracil. It participates in pyrimidine metabolism; UMP biosynthesis via salvage pathway; UMP from uracil: step 1/1. Allosterically activated by GTP. Its function is as follows. Catalyzes the conversion of uracil and 5-phospho-alpha-D-ribose 1-diphosphate (PRPP) to UMP and diphosphate. The chain is Uracil phosphoribosyltransferase from Variovorax paradoxus (strain S110).